The following is a 352-amino-acid chain: Heat-inducible transcription repressor HrcA (352 aa).

The protein belongs to the HrcA family.

Negative regulator of class I heat shock genes (grpE-dnaK-dnaJ and groELS operons). Prevents heat-shock induction of these operons. This Prochlorococcus marinus (strain MIT 9313) protein is Heat-inducible transcription repressor HrcA.